A 118-amino-acid polypeptide reads, in one-letter code: Large ribosomal subunit protein bL17 (118 aa).

Belongs to the bacterial ribosomal protein bL17 family. As to quaternary structure, part of the 50S ribosomal subunit. Contacts protein L32.

The chain is Large ribosomal subunit protein bL17 from Campylobacter concisus (strain 13826).